The following is a 300-amino-acid chain: Probable alpha-L-glutamate ligase (300 aa).

The ATP-grasp domain maps to 104-287; it reads LQLLARQGID…IAGKMISWIE (184 aa). ATP is bound by residues lysine 141, 178–179, aspartate 187, and 211–213; these read EY and RSN. Residues aspartate 248, glutamate 260, and asparagine 262 each coordinate Mg(2+). Positions 248, 260, and 262 each coordinate Mn(2+).

It belongs to the RimK family. The cofactor is Mg(2+). Mn(2+) is required as a cofactor.

The protein is Probable alpha-L-glutamate ligase of Enterobacter sp. (strain 638).